The sequence spans 529 residues: Cytochrome P450 monooxygenase okaD (529 aa).

The helical transmembrane segment at 13–35 threads the bilayer; that stretch reads LPAQHLLASLALVGALLSVGYLL. Cysteine 435 lines the heme pocket.

It belongs to the cytochrome P450 family. Heme serves as cofactor.

It is found in the membrane. The enzyme catalyses okaramine C + 2 reduced [NADPH--hemoprotein reductase] + 2 O2 = okaramine A + 2 oxidized [NADPH--hemoprotein reductase] + 4 H2O + 2 H(+). It participates in alkaloid biosynthesis. Its function is as follows. Cytochrome P450 monooxygenase; part of the gene cluster that mediates the biosynthesis of okaramine B, a prenylated indole alkaloid that possesses an unusual octacyclic ring system, including a four-membered azetidine ring and an eight-membered azocine ring, and that exhibits insecticidal activity against silkworm larvae. Within the pathway, okaD likely catalyzes a key step in forming the eight-membered ring of okaramine A using as substrate okaramine C. The biosynthesis begins with the NRPS okaA that condenses two tryptophan molecules into cyclo(L-Trp-L-Trp). Prenylation by the prenyltransferase okaC then leads to the formation of cyclo(N8-(alpha,alpha-dimethylallyl)-L-Trp-6a-(alpha,alpha-dime-thylallyl)-L-Trp). This is followed by indole 2,3-epoxidation by the FAD-dependent monooxygenase okaB to facilitate the formation of the hexahydropyrrolo[2,3-b]indole (HPI) moiety of okaramine C. The cytochrome P450 monooxygenase okaD then likely catalyzes formation of the eight-membered ring of okaramine A. The dioxygenase okaE further forms the unusual 2-dimethyl-3-methyl-azetidine ring to yield 12-deshydroxyl okaramine E, as well as the hydroxylation of 12-deshydroxyl okaramine E to produce okaramine E. The cytochrome P450 monoxygenase okaG converts 12-deshydroxyl okaramine E into 3-desmethyl okaramine B which is further methylated by the methyltransferase okaF into okaramine B. In a shunt pathway, okaG and okaF together are also able to convert okaramine E into okaramine D. Okaramine H is produced by nonenzymatic conversion from okaramine A. This Penicillium ochrochloron protein is Cytochrome P450 monooxygenase okaD.